Here is an 80-residue protein sequence, read N- to C-terminus: Exodeoxyribonuclease 7 small subunit (80 aa).

The protein belongs to the XseB family. Heterooligomer composed of large and small subunits.

It localises to the cytoplasm. The catalysed reaction is Exonucleolytic cleavage in either 5'- to 3'- or 3'- to 5'-direction to yield nucleoside 5'-phosphates.. Functionally, bidirectionally degrades single-stranded DNA into large acid-insoluble oligonucleotides, which are then degraded further into small acid-soluble oligonucleotides. The chain is Exodeoxyribonuclease 7 small subunit from Pseudomonas aeruginosa (strain LESB58).